Here is a 299-residue protein sequence, read N- to C-terminus: ATP phosphoribosyltransferase (299 aa).

This sequence belongs to the ATP phosphoribosyltransferase family. Long subfamily. Equilibrium between an active dimeric form, an inactive hexameric form and higher aggregates. Interconversion between the various forms is largely reversible and is influenced by the natural substrates and inhibitors of the enzyme. Requires Mg(2+) as cofactor.

Its subcellular location is the cytoplasm. It catalyses the reaction 1-(5-phospho-beta-D-ribosyl)-ATP + diphosphate = 5-phospho-alpha-D-ribose 1-diphosphate + ATP. It participates in amino-acid biosynthesis; L-histidine biosynthesis; L-histidine from 5-phospho-alpha-D-ribose 1-diphosphate: step 1/9. Its activity is regulated as follows. Feedback inhibited by histidine. Functionally, catalyzes the condensation of ATP and 5-phosphoribose 1-diphosphate to form N'-(5'-phosphoribosyl)-ATP (PR-ATP). Has a crucial role in the pathway because the rate of histidine biosynthesis seems to be controlled primarily by regulation of HisG enzymatic activity. This is ATP phosphoribosyltransferase from Buchnera aphidicola subsp. Acyrthosiphon pisum (strain 5A).